The primary structure comprises 1997 residues: Protein MOR1 (1997 aa).

HEAT repeat units lie at residues 48–86 and 164–202; these read DARL…AADA and VVPP…WIGK. The interval 236–264 is disordered; that stretch reads RKIRSEQEKELEEEVVPEAAGTNNSEEAV. 3 HEAT repeats span residues 321–359, 362–400, and 441–479; these read PGDF…GLRT, SGNS…SGCI, and LKLH…MVGM. Residues 501 to 576 form a disordered region; that stretch reads IGSASDTTSG…DGGPQSKASA (76 aa). The span at 504 to 520 shows a compositional bias: polar residues; it reads ASDTTSGTVAASNTGVG. Residues 529-539 are compositionally biased toward low complexity; the sequence is SSSMRRSAASM. HEAT repeat units lie at residues 848–886, 890–928, 931–969, and 1007–1045; these read EDIS…EAHK, PTGT…AMGP, EKSS…AAQL, and PSEA…ICGQ. The interval 1087–1115 is disordered; the sequence is MSLPSKAGSKNNKHGPNDRGSNVSKAVSQ. HEAT repeat units lie at residues 1233-1259, 1260-1294, 1295-1332, and 1334-1372; these read TTCL…MLTE, AEAA…MVNI, YSLP…HHGT, and VSGL…NLGD. The span at 1400-1410 shows a compositional bias: basic and acidic residues; that stretch reads MDKRREGRPGD. The segment at 1400 to 1436 is disordered; the sequence is MDKRREGRPGDARAALRRSVRENGSDIAEQSGEAVSR. The HEAT 14 repeat unit spans residues 1539–1579; the sequence is RSCKYVLNTLMQTFQIKRLAHAVKEGTLDNLITELLLWLLD. The tract at residues 1755-1776 is disordered; it reads MGQTHWGDAGSNNPNPSTHSTD. A compositionally biased stretch (polar residues) spans 1764 to 1776; it reads GSNNPNPSTHSTD.

The protein belongs to the TOG/XMAP215 family.

It is found in the cytoplasm. It localises to the cytoskeleton. In terms of biological role, microtubule-associated protein that is essential for cortical microtubules organization and function. This Oryza sativa subsp. japonica (Rice) protein is Protein MOR1 (MOR1).